The following is an 88-amino-acid chain: Small ribosomal subunit protein uS15 (88 aa).

It belongs to the universal ribosomal protein uS15 family. Part of the 30S ribosomal subunit. Forms a bridge to the 50S subunit in the 70S ribosome, contacting the 23S rRNA.

One of the primary rRNA binding proteins, it binds directly to 16S rRNA where it helps nucleate assembly of the platform of the 30S subunit by binding and bridging several RNA helices of the 16S rRNA. In terms of biological role, forms an intersubunit bridge (bridge B4) with the 23S rRNA of the 50S subunit in the ribosome. This Geobacter sp. (strain M21) protein is Small ribosomal subunit protein uS15.